The sequence spans 71 residues: Conotoxin PnMEKL-032 (71 aa).

An N-terminal signal peptide occupies residues 1–19; that stretch reads MQKLIILLLVAAVLMSTQA. Positions 20 to 46 are excised as a propeptide; sequence LFQEKRLKEKINFLSKEKADAEKQQKR. Cystine bridges form between Cys48–Cys62, Cys55–Cys66, and Cys61–Cys70.

It belongs to the conotoxin O2 superfamily. In terms of tissue distribution, expressed by the venom duct.

The protein localises to the secreted. The chain is Conotoxin PnMEKL-032 from Conus pennaceus (Feathered cone).